The sequence spans 363 residues: Mitogen-activated protein kinase 12 (363 aa).

The region spanning 25-309 (YKDLKQVGTG…AAEALAFPFF (285 aa)) is the Protein kinase domain. Residues 31-39 (VGTGAYGTV) and Lys54 each bind ATP. Asp151 serves as the catalytic Proton acceptor. Thr181 carries the phosphothreonine modification. The short motif at 181 to 183 (TGY) is the TXY element. Tyr183 carries the post-translational modification Phosphotyrosine.

This sequence belongs to the protein kinase superfamily. CMGC Ser/Thr protein kinase family. MAP kinase subfamily. Mg(2+) is required as a cofactor. Post-translationally, dually phosphorylated on Thr-181 and Tyr-183, which activates the enzyme.

The protein localises to the cytoplasm. It catalyses the reaction L-seryl-[protein] + ATP = O-phospho-L-seryl-[protein] + ADP + H(+). The enzyme catalyses L-threonyl-[protein] + ATP = O-phospho-L-threonyl-[protein] + ADP + H(+). Activated by threonine and tyrosine phosphorylation. Functionally, serine/threonine kinase which acts as an essential component of the MAP kinase signal transduction pathway. MAPK12 is one of the four p38 MAPKs which play an important role in the cascades of cellular responses evoked by extracellular stimuli such as pro-inflammatory cytokines or physical stress leading to direct activation of transcription factors. Accordingly, p38 MAPKs phosphorylate a broad range of proteins and it has been estimated that they may have approximately 200 to 300 substrates each. Some of the targets are downstream kinases such as MAPKAPK2, which are activated through phosphorylation and further phosphorylate additional targets. The protein is Mitogen-activated protein kinase 12 (mapk12) of Danio rerio (Zebrafish).